The primary structure comprises 242 residues: Biosynthetic peptidoglycan transglycosylase (242 aa).

The helical transmembrane segment at 19-39 (ILAALAVFWGGGIALFSVVPV) threads the bilayer.

This sequence belongs to the glycosyltransferase 51 family.

The protein resides in the cell inner membrane. The catalysed reaction is [GlcNAc-(1-&gt;4)-Mur2Ac(oyl-L-Ala-gamma-D-Glu-L-Lys-D-Ala-D-Ala)](n)-di-trans,octa-cis-undecaprenyl diphosphate + beta-D-GlcNAc-(1-&gt;4)-Mur2Ac(oyl-L-Ala-gamma-D-Glu-L-Lys-D-Ala-D-Ala)-di-trans,octa-cis-undecaprenyl diphosphate = [GlcNAc-(1-&gt;4)-Mur2Ac(oyl-L-Ala-gamma-D-Glu-L-Lys-D-Ala-D-Ala)](n+1)-di-trans,octa-cis-undecaprenyl diphosphate + di-trans,octa-cis-undecaprenyl diphosphate + H(+). The protein operates within cell wall biogenesis; peptidoglycan biosynthesis. Functionally, peptidoglycan polymerase that catalyzes glycan chain elongation from lipid-linked precursors. This chain is Biosynthetic peptidoglycan transglycosylase, found in Salmonella newport (strain SL254).